The sequence spans 518 residues: Glutamate--cysteine ligase (518 aa).

This sequence belongs to the glutamate--cysteine ligase type 1 family. Type 1 subfamily.

The enzyme catalyses L-cysteine + L-glutamate + ATP = gamma-L-glutamyl-L-cysteine + ADP + phosphate + H(+). Its pathway is sulfur metabolism; glutathione biosynthesis; glutathione from L-cysteine and L-glutamate: step 1/2. This is Glutamate--cysteine ligase from Salmonella gallinarum (strain 287/91 / NCTC 13346).